A 1273-amino-acid polypeptide reads, in one-letter code: Paired amphipathic helix protein Sin3a (1273 aa).

Disordered stretches follow at residues 1 to 23 (MKRR…IPGS) and 87 to 110 (HPTA…PPVA). S10 carries the phosphoserine modification. A PAH 1 domain is found at 119–189 (QRLKVEDALS…MGFNTFLPPG (71 aa)). The interval 119 to 196 (QRLKVEDALS…PPGYKIEVQT (78 aa)) is interaction with HCFC1. Residues K122 and K134 each participate in a glycyl lysine isopeptide (Lys-Gly) (interchain with G-Cter in SUMO2) cross-link. Positions 205–297 (PGQVHQIPTH…ISLGTAPSLQ (93 aa)) are disordered. The tract at residues 205 to 480 (PGQVHQIPTH…RKALRSAEAY (276 aa)) is interaction with REST. Residues 228 to 237 (SQPSAQSAPA) are compositionally biased toward low complexity. Positions 238 to 248 (PAQPAPQPPPA) are enriched in pro residues. Positions 252-266 (KPSQLQAHTPASQQT) are enriched in polar residues. The span at 267–282 (PPLPPYASPRSPPVQP) shows a compositional bias: pro residues. Residue S277 is modified to Phosphoserine. T284 is subject to Phosphothreonine. The span at 284–297 (TPVTISLGTAPSLQ) shows a compositional bias: polar residues. The 84-residue stretch at 300–383 (QPVEFNHAIN…SEFGQFLPDA (84 aa)) folds into the PAH 2 domain. The segment at 398-446 (DSVRNDHGGTVKKPQLNNKPQRPSQNGCQIRRHPTGTTPPVKKKPKLLN) is disordered. A compositionally biased stretch (polar residues) spans 412 to 425 (QLNNKPQRPSQNGC). In terms of domain architecture, PAH 3 spans 456–525 (SKHGGGTESL…NWFKNFLGYK (70 aa)). The segment at 458-525 (HGGGTESLFF…NWFKNFLGYK (68 aa)) is interaction with SAP30. K469 is subject to N6-acetyllysine. Residues 523-850 (GYKESVHLET…EMDVDEATGA (328 aa)) are interaction with NCOR1. The segment at 524-659 (YKESVHLETY…KFRLDNTLGG (136 aa)) is interaction with SUDS3 and SAP130. K563 is covalently cross-linked (Glycyl lysine isopeptide (Lys-Gly) (interchain with G-Cter in SUMO2)). An interaction with HDAC1 and ARID4B region spans residues 687-829 (NPSIAVPIVL…IPDLLFAQRG (143 aa)). Phosphoserine is present on residues S832 and S860. N6-acetyllysine occurs at positions 865 and 875. Residues 888–967 (VNNNWYIFMR…YYPAFLDMVR (80 aa)) are interaction with OGT. Residues 903 to 932 (CLRLLRICSQAERQIEEENREREWEREVLG) adopt a coiled-coil conformation. 3 positions are modified to phosphoserine: S940, S1089, and S1112. The tract at residues 1136-1156 (CQRGREQQEKEGKEGNSKKTM) is disordered. Over residues 1138–1156 (RGREQQEKEGKEGNSKKTM) the composition is skewed to basic and acidic residues.

As to quaternary structure, interacts with ARID4B, BRMS1L, HCFC1, HDAC1, HDAC2, MXI1, SAP30L, SAP130, SFPQ and TOPORS. Interacts with OGT (via TPRs 1-6); the interaction mediates transcriptional repression in parallel with histone deacetylase. Interacts with BAZ2A, MXD1, MXD3, MXD4, MBD2, DACH1, NCOR1, NR4A2, REST, RLIM, SAP30, SETDB1, SMYD2, and SUDS3. Interacts with PHF12 in a complex composed of HDAC1, PHF12 and SAP30. Interacts with TET1; the interaction recruits SIN3A to gene promoters. The large PER complex involved in the histone deacetylation is composed of at least HDAC1, PER2, SFPQ and SIN3A. Interacts with KLF11. Interacts with PPHLN1. Found in a complex with YY1, GON4L and HDAC1. Interacts (via PAH2) with FOXK1. Interacts with FOXK2. Found in a complex composed of at least SINHCAF, SIN3A, HDAC1, SAP30, RBBP4, OGT and TET1. Interacts with SINHCAF. Interacts with SPHK2. Post-translationally, SUMO1 sumoylated by TOPORS. Probably desumoylated by SENP2. Expressed in the developing brain, with highest levels of expression detected in the ventricular zone of various cortical regions.

Its subcellular location is the nucleus. It localises to the nucleolus. In terms of biological role, acts as a transcriptional repressor. Corepressor for REST. Interacts with MXI1 to repress MYC responsive genes and antagonize MYC oncogenic activities. Also interacts with MXD1-MAX heterodimers to repress transcription by tethering SIN3A to DNA. Acts cooperatively with OGT to repress transcription in parallel with histone deacetylation. Involved in the control of the circadian rhythms. Required for the transcriptional repression of circadian target genes, such as PER1, mediated by the large PER complex through histone deacetylation. Cooperates with FOXK1 to regulate cell cycle progression probably by repressing cell cycle inhibitor genes expression. Required for cortical neuron differentiation and callosal axon elongation. In Homo sapiens (Human), this protein is Paired amphipathic helix protein Sin3a.